We begin with the raw amino-acid sequence, 248 residues long: Ubiquinone biosynthesis O-methyltransferase (248 aa).

S-adenosyl-L-methionine is bound by residues R40, G71, D92, and M135.

It belongs to the methyltransferase superfamily. UbiG/COQ3 family.

It catalyses the reaction a 3-demethylubiquinol + S-adenosyl-L-methionine = a ubiquinol + S-adenosyl-L-homocysteine + H(+). The enzyme catalyses a 3-(all-trans-polyprenyl)benzene-1,2-diol + S-adenosyl-L-methionine = a 2-methoxy-6-(all-trans-polyprenyl)phenol + S-adenosyl-L-homocysteine + H(+). It participates in cofactor biosynthesis; ubiquinone biosynthesis. In terms of biological role, O-methyltransferase that catalyzes the 2 O-methylation steps in the ubiquinone biosynthetic pathway. This Dinoroseobacter shibae (strain DSM 16493 / NCIMB 14021 / DFL 12) protein is Ubiquinone biosynthesis O-methyltransferase.